The following is a 1453-amino-acid chain: NK-tumor recognition protein (1453 aa).

One can recognise a PPIase cyclophilin-type domain in the interval 10 to 175; the sequence is HFDIEINREP…ADVRVIDCGV (166 aa). The disordered stretch occupies residues 187-625; the sequence is KKRKKPTCSE…RWKPGQKPWK (439 aa). Low complexity predominate over residues 195 to 213; the sequence is SEGSDSSSRSSSSSESSSE. Residues 221–240 show a composition bias toward basic residues; that stretch reads IRRRRHKRRPKVRHAKKRRK. Basic and acidic residues predominate over residues 259–286; it reads YSERSDVNEKRSVDSNTKREKPVVRPEE. Lysine 323 is covalently cross-linked (Glycyl lysine isopeptide (Lys-Gly) (interchain with G-Cter in SUMO2)). A compositionally biased stretch (basic residues) spans 329–348; sequence SGRKIKGRGTIRYHTPPRSR. Phosphoserine occurs at positions 379, 401, and 416. Over residues 382–402 the composition is skewed to basic and acidic residues; that stretch reads KWSKGDKLSDPCSSRWDERSL. The span at 403-421 shows a compositional bias: polar residues; that stretch reads SQRSRSWSYNGYYSDLSTA. Residues 425–460 are compositionally biased toward basic residues; sequence DGHHKKHRKEKKFKHKKKAKKQKHCRRHRQTKKRRI. Basic and acidic residues predominate over residues 514 to 531; the sequence is SSRDSYRSKSHSRSDSRG. Composition is skewed to low complexity over residues 532–546 and 554–565; these read SSRSRAVSKSSSRSL and SSRSGPRRTSIS. Glycyl lysine isopeptide (Lys-Gly) (interchain with G-Cter in SUMO2) cross-links involve residues lysine 576 and lysine 579. Phosphoserine is present on serine 611. Lysine 637 is covalently cross-linked (Glycyl lysine isopeptide (Lys-Gly) (interchain with G-Cter in SUMO2)). A Phosphoserine modification is found at serine 646. Over residues 651 to 661 the composition is skewed to polar residues; the sequence is TNIKATVSSSS. The disordered stretch occupies residues 651–1453; that stretch reads TNIKATVSSS…RSPSESSRYS (803 aa). Residues lysine 654 and lysine 664 each participate in a glycyl lysine isopeptide (Lys-Gly) (interchain with G-Cter in SUMO2) cross-link. Composition is skewed to low complexity over residues 682-726 and 736-749; these read RSSG…SSRS and SQHSRSSSYTSVSS. Positions 755–772 are enriched in basic residues; the sequence is AMFRSNRKKSVTSHKRHR. Positions 773 to 789 are enriched in basic and acidic residues; that stretch reads SNSEKTLHSKYVRGREK. A compositionally biased stretch (low complexity) spans 799 to 809; that stretch reads SRSSLDYSSDS. 2 stretches are compositionally biased toward basic and acidic residues: residues 820 to 852 and 859 to 868; these read PEKEKQGKVEALNDKQGKGREEGKPKPEWECPR and KDHSRDDSVS. Residues serine 880, serine 882, serine 884, and serine 900 each carry the phosphoserine modification. Residues 887–902 show a composition bias toward basic and acidic residues; sequence DVTKSRKSDPRRGSEK. Over residues 903–913 the composition is skewed to acidic residues; the sequence is EEGEASSDSES. Residues 948 to 958 show a composition bias toward low complexity; it reads SSASESESSCS. Basic and acidic residues predominate over residues 966-982; sequence EPQKQKHSKDDLKGDHT. The span at 983-1005 shows a compositional bias: basic residues; that stretch reads KRAREKSKAKKDKKHKAPKRKQA. The span at 1030 to 1045 shows a compositional bias: basic and acidic residues; the sequence is DPKEKRHVSEKCEAVK. Phosphoserine is present on residues serine 1139 and serine 1148. The span at 1170 to 1180 shows a compositional bias: polar residues; that stretch reads QESSMSESKTL. Residues 1189–1199 are compositionally biased toward low complexity; sequence SSTSVTSPVET. Residue serine 1195 is modified to Phosphoserine. Glycyl lysine isopeptide (Lys-Gly) (interchain with G-Cter in SUMO2) cross-links involve residues lysine 1208 and lysine 1249. The tract at residues 1303-1453 is arg/Ser tandem repeat-rich; that stretch reads RSPHRSRSKS…RSPSESSRYS (151 aa). A compositionally biased stretch (low complexity) spans 1322-1346; that stretch reads SVSYSHSRSRSRSSTSSYRSRSYSR. The span at 1369–1379 shows a compositional bias: basic residues; the sequence is HSHRTSSRSRS. The span at 1380–1401 shows a compositional bias: low complexity; the sequence is RSSSYDLHSRSRSYTYDSYYSR. Positions 1416–1426 are enriched in basic residues; sequence RGRSYNRRSRS.

Its subcellular location is the cell membrane. It carries out the reaction [protein]-peptidylproline (omega=180) = [protein]-peptidylproline (omega=0). Inhibited by cyclosporin A (CsA). In terms of biological role, PPIase that catalyzes the cis-trans isomerization of proline imidic peptide bonds in oligopeptides and may therefore assist protein folding. Component of a putative tumor-recognition complex involved in the function of NK cells. This is NK-tumor recognition protein from Mus musculus (Mouse).